Consider the following 960-residue polypeptide: MKRGIDIVQALKNSKRSKSSDDSVESKLSKASPDLSQYAAVQISKEDVTVNPEVKSTIDNHKKEPPSIASSIKKSPKTVIGKHANSTKKPKKRTPLDQQFIDLKNEYPDCVLAIQVGYKYKFFGVDAVPVSRILNIMFIPGNLTERDATHDKFAYCSVPDNRLHIHLQRLLTNGLKVAVVSQTESAVLREAESSKGLFLREVTAIYTKATYIEEGSGDFISCITWNGTSAGAVTVQPCTGEIIVEDFSEKEPEALSELQTYLHHLRPSEIIVTDNEATKENDKLSRLLKSFGGARISYKPFDEVSPIEELLPASIANYYVTNHSTTTTQCISQLITYLKDFSLDQIFTVPSNVSKFSTKMYMNLPGNTLKALEIFQNSSGTEKGTLFWHLDHTHTKMGRRMLQKWVSKPLIDNASIQERLDAIESLMNYNYAVEVFEGIIKKIGRDESDWEKSMIKIHYTANGSQNRVTRKEVVQLLLQFRSVIDTVYKFKSSFKDSSISKLLQSMFSELAELASTPIVNDLLSRVKIEAVYREEVEDQKKEFFDLDSHPHEGIKSELNAISELEQALQDELVEIKKIIKKPVDYMTVSREPYLIALRGDSGPQDWLKISATKTVTRYRPPKVSKLYKELLYHQEKLIQQCDEAFATFLKDIDSHYTYFSRLIKIVAEIDCLLSLKATSSSNSGYSKPILSDKQMIKAKRSRNPVIENLTSTSQYVANDIEISYDENRVLIITGPNMGGKSSYVKQVALIALMTQIGCYLPCESAIVGIFDTILVRMGAEDNILKGESTFMVEMSECSTIIKSLTNKSLVILDEIGRGTGTEDGIAIAYSIISYLIEEPRLPLTLFITHYPSLKVLEDTHPKNVANYHMGFMEVAKADQEWPDVTFLYTLKRGVVSNSYGLNVARLAGIPSEIITKAFKVAEALKQDIEDSELSSMGQILKSEQSSASKLVEIDRIVSYI.

Disordered stretches follow at residues 1–35 (MKRG…SPDL) and 53–93 (EVKS…PKKR). Composition is skewed to basic and acidic residues over residues 18–28 (KSSDDSVESKL) and 56–65 (STIDNHKKEP). The mispair-binding domain stretch occupies residues 87 to 209 (TKKPKKRTPL…REVTAIYTKA (123 aa)). 734–741 (GPNMGGKS) provides a ligand contact to ATP.

This sequence belongs to the DNA mismatch repair MutS family. MSH3 subfamily. Heterodimer consisting of MSH2-MSH3 (MutS beta). Forms a ternary complex with MutL alpha (MLH1-PMS1).

The protein resides in the nucleus. Functionally, component of the post-replicative DNA mismatch repair system (MMR). Heterodimerizes with MSH2 to form MutS beta, which binds to DNA mismatches thereby initiating DNA repair. MSH3 provides substrate-binding and substrate specificity to the complex. When bound, the MutS beta heterodimer bends the DNA helix and shields approximately 20 base pairs. Acts mainly to repair insertion-deletion loops (IDLs) from 2 to 13 nucleotides in size, but can also repair base-base and single insertion-deletion mismatches that occur during replication. After mismatch binding, forms a ternary complex with the MutL alpha heterodimer, which is thought to be responsible for directing the downstream MMR events, including strand discrimination, excision, and resynthesis. ATP binding and hydrolysis play a pivotal role in mismatch repair functions. The chain is DNA mismatch repair protein MSH3 (MSH3) from Meyerozyma guilliermondii (strain ATCC 6260 / CBS 566 / DSM 6381 / JCM 1539 / NBRC 10279 / NRRL Y-324) (Yeast).